The primary structure comprises 370 residues: DNA replication and repair protein RecF (370 aa).

30 to 37 (GENAQGKT) contributes to the ATP binding site.

It belongs to the RecF family.

It localises to the cytoplasm. Its function is as follows. The RecF protein is involved in DNA metabolism; it is required for DNA replication and normal SOS inducibility. RecF binds preferentially to single-stranded, linear DNA. It also seems to bind ATP. This chain is DNA replication and repair protein RecF, found in Staphylococcus aureus (strain bovine RF122 / ET3-1).